The chain runs to 337 residues: MSFFGFGPAAELDIALTDGESRRRAEHKTEDGKKEKYFLFYDGETVSGRVTVNLRNPGKRLEHQGLKIEFIGQIELYYDRGNHHEFVSLVKDLARPGEISQSQSFDFEFTHVEKPYESYTGQNVKLRYFLRATLSRRLNDVVKEMDIVVHTLSTYPELNSSIKMEVGIEDCLHIEFEYNKSKYHLKDVIVGKIYFLLVRIKIKHMEIDIIKRETTGTGPNVYHENDTIAKYEIMDGAPVRGESIPIRLFLAGYELTPTMRDINKKFSVRYYLNLVLIDEEERRYFKQQEIVLWRKGDIVRKSMSHQAAIASQRFEGTSHPETRPQHSGAAAVEQEHE.

The tract at residues 313 to 337 (RFEGTSHPETRPQHSGAAAVEQEHE) is disordered.

Belongs to the VPS26 family. As to quaternary structure, component of the heterotrimeric retromer cargo-selective complex (CSC) which is believed to associate with variable sorting nexins to form functionally distinct retromer complex variants.

Its subcellular location is the cytoplasm. The protein resides in the endosome membrane. It is found in the early endosome. Its function is as follows. Acts as a component of the retromer cargo-selective complex (CSC). The CSC is believed to be the core functional component of retromer or respective retromer complex variants acting to prevent missorting of selected transmembrane cargo proteins into the lysosomal degradation pathway. Retromer mediates retrograde transport of cargo proteins from endosomes to the trans-Golgi network (TGN). This is Vacuolar protein sorting-associated protein 26B-A (vps26b-a) from Xenopus laevis (African clawed frog).